Here is a 349-residue protein sequence, read N- to C-terminus: Lachesin (349 aa).

The N-terminal stretch at 1–18 is a signal peptide; sequence MDLRLYTIFVGFFSVVYA. Residues 22–127 form the Ig-like V-type domain; that stretch reads PTISYISQEQ…NKITAEVDLQ (106 aa). Cys-43 and Cys-110 form a disulfide bridge. Ig-like C2-type domains follow at residues 132–218 and 222–315; these read PVIS…IAVE and PPVI…VELF. N-linked (GlcNAc...) asparagine glycosylation occurs at Asn-137. 2 cysteine pairs are disulfide-bonded: Cys-154–Cys-201 and Cys-244–Cys-299. Residue Gly-332 is the site of GPI-anchor amidated glycine attachment. A propeptide spans 333 to 349 (removed in mature form); that stretch reads DAAEISTSMALILISTI.

Post-translationally, the N-terminus is blocked. Expressed by all neurogenic cells early, but only those cells that become neuroblasts continue to express it. Expressed by neuroblasts, ganglion mother cells and neurons early in their lives, but expression becomes restricted to a subset of neurons as development progresses. Expressed by sensory neurons as they delaminate from the body wall ectoderm. It is also present on growing axons of the CNS and PNS and becomes restricted to a subset of axons later in development.

The protein localises to the cell membrane. May play a role in early neuronal differentiation and axon outgrowth. In Schistocerca americana (American grasshopper), this protein is Lachesin (LAC).